Here is a 211-residue protein sequence, read N- to C-terminus: Protein-L-isoaspartate O-methyltransferase (211 aa).

Ser-60 is an active-site residue.

The protein belongs to the methyltransferase superfamily. L-isoaspartyl/D-aspartyl protein methyltransferase family.

The protein resides in the cytoplasm. The enzyme catalyses [protein]-L-isoaspartate + S-adenosyl-L-methionine = [protein]-L-isoaspartate alpha-methyl ester + S-adenosyl-L-homocysteine. In terms of biological role, catalyzes the methyl esterification of L-isoaspartyl residues in peptides and proteins that result from spontaneous decomposition of normal L-aspartyl and L-asparaginyl residues. It plays a role in the repair and/or degradation of damaged proteins. The polypeptide is Protein-L-isoaspartate O-methyltransferase (Pseudomonas aeruginosa (strain LESB58)).